The following is a 201-amino-acid chain: Probable nicotinate-nucleotide adenylyltransferase (201 aa).

The interval 182 to 201 (GPESSQSATSIRERGGWSLR) is disordered. Positions 192-201 (IRERGGWSLR) are enriched in basic and acidic residues.

It belongs to the NadD family.

The catalysed reaction is nicotinate beta-D-ribonucleotide + ATP + H(+) = deamido-NAD(+) + diphosphate. Its pathway is cofactor biosynthesis; NAD(+) biosynthesis; deamido-NAD(+) from nicotinate D-ribonucleotide: step 1/1. In terms of biological role, catalyzes the reversible adenylation of nicotinate mononucleotide (NaMN) to nicotinic acid adenine dinucleotide (NaAD). This Parvibaculum lavamentivorans (strain DS-1 / DSM 13023 / NCIMB 13966) protein is Probable nicotinate-nucleotide adenylyltransferase.